We begin with the raw amino-acid sequence, 559 residues long: Formate--tetrahydrofolate ligase (559 aa).

68-75 (TPAGEGKS) is an ATP binding site.

This sequence belongs to the formate--tetrahydrofolate ligase family.

It carries out the reaction (6S)-5,6,7,8-tetrahydrofolate + formate + ATP = (6R)-10-formyltetrahydrofolate + ADP + phosphate. Its pathway is one-carbon metabolism; tetrahydrofolate interconversion. The chain is Formate--tetrahydrofolate ligase from Clostridium tetani (strain Massachusetts / E88).